Here is a 390-residue protein sequence, read N- to C-terminus: Protein STRICTOSIDINE SYNTHASE-LIKE 3 (390 aa).

The first 25 residues, 1-25, serve as a signal peptide directing secretion; it reads MAMSILAKIFLVFAIYCAIDPFSHS. N-linked (GlcNAc...) asparagine glycans are attached at residues N95 and N108.

It belongs to the strictosidine synthase family.

It is found in the vacuole. The chain is Protein STRICTOSIDINE SYNTHASE-LIKE 3 from Arabidopsis thaliana (Mouse-ear cress).